Here is a 251-residue protein sequence, read N- to C-terminus: Phosphate import ATP-binding protein PstB (251 aa).

An ABC transporter domain is found at 5-246 (MNSKDVNFWY…PENKKTEDYI (242 aa)). An ATP-binding site is contributed by 37–44 (GPSGCGKS).

It belongs to the ABC transporter superfamily. Phosphate importer (TC 3.A.1.7) family. As to quaternary structure, the complex is composed of two ATP-binding proteins (PstB), two transmembrane proteins (PstC and PstA) and a solute-binding protein (PstS).

It localises to the cell membrane. The enzyme catalyses phosphate(out) + ATP + H2O = ADP + 2 phosphate(in) + H(+). In terms of biological role, part of the ABC transporter complex PstSACB involved in phosphate import. Responsible for energy coupling to the transport system. The chain is Phosphate import ATP-binding protein PstB from Methanococcus maripaludis (strain DSM 14266 / JCM 13030 / NBRC 101832 / S2 / LL).